The sequence spans 253 residues: Phosphoglycerate mutase 2 (253 aa).

Phosphothreonine is present on Thr-3. Residues 10-17, 23-24, Arg-62, 89-92, Lys-100, and 116-117 contribute to the substrate site; these read RHGESSWN, CG, ERHY, and RR. His-11 acts as the Tele-phosphohistidine intermediate in catalysis. A phosphoserine mark is found at Ser-14 and Ser-15. Catalysis depends on Glu-89, which acts as the Proton donor/acceptor. At Ser-118 the chain carries Phosphoserine. Thr-121 is subject to Phosphothreonine. Tyr-132 and Tyr-133 each carry phosphotyrosine. At Ser-135 the chain carries Phosphoserine. Position 152 is a phosphothreonine (Thr-152). 187–188 serves as a coordination point for substrate; the sequence is GN.

The protein belongs to the phosphoglycerate mutase family. BPG-dependent PGAM subfamily. Homodimer. Interacts with ENO1.

It carries out the reaction (2R)-2-phosphoglycerate = (2R)-3-phosphoglycerate. The catalysed reaction is (2R)-3-phospho-glyceroyl phosphate = (2R)-2,3-bisphosphoglycerate + H(+). In terms of biological role, interconversion of 3- and 2-phosphoglycerate with 2,3-bisphosphoglycerate as the primer of the reaction. Can also catalyze the reaction of EC 5.4.2.4 (synthase), but with a reduced activity. This Rattus norvegicus (Rat) protein is Phosphoglycerate mutase 2 (Pgam2).